A 231-amino-acid polypeptide reads, in one-letter code: Aldehyde decarbonylase (231 aa).

The Fe cation site is built by E32, E60, H63, E115, and H147.

The protein belongs to the aldehyde decarbonylase family. Binds 2 metal cations per subunit. The catalytic dinuclear metal-binding site could be either a di-iron or a manganese-iron cofactor. serves as cofactor.

It carries out the reaction a long-chain fatty aldehyde + 2 NADPH + O2 + H(+) = a long-chain alkane + formate + 2 NADP(+) + H2O. Its function is as follows. Catalyzes the decarbonylation of fatty aldehydes to alkanes. Requires the presence of ferredoxin, ferredoxin reductase and NADPH for in vitro decarbonylase activity. Involved in the biosynthesis of alkanes, mainly heptadecane and pentadecane. In Synechocystis sp. (strain ATCC 27184 / PCC 6803 / Kazusa), this protein is Aldehyde decarbonylase.